The chain runs to 244 residues: Chalcone--flavanone isomerase (244 aa).

Substrate contacts are provided by Thr57, Asn122, and Ser199.

Belongs to the chalcone isomerase family.

The catalysed reaction is a chalcone = a flavanone.. Its pathway is secondary metabolite biosynthesis; flavonoid biosynthesis. Functionally, catalyzes the intramolecular cyclization of bicyclic chalcones into tricyclic (S)-flavanones. Responsible for the isomerization of 4,2',4',6'-tetrahydroxychalcone (also termed chalcone) into naringenin. This is Chalcone--flavanone isomerase (CHI) from Arabidopsis lyrata subsp. petraea (Northern rock-cress).